Reading from the N-terminus, the 91-residue chain is uncharacterized protein (91 aa).

This is an uncharacterized protein from Archaeoglobus fulgidus (strain ATCC 49558 / DSM 4304 / JCM 9628 / NBRC 100126 / VC-16).